Reading from the N-terminus, the 329-residue chain is Probable aryl-alcohol dehydrogenase AAD4 (329 aa).

Tyrosine 30 (proton donor) is an active-site residue. Histidine 105 is a substrate binding site. NADP(+) is bound at residue 190–200 (DVMGGGRFQSK).

This sequence belongs to the aldo/keto reductase family. Aldo/keto reductase 2 subfamily.

This Saccharomyces cerevisiae (strain ATCC 204508 / S288c) (Baker's yeast) protein is Probable aryl-alcohol dehydrogenase AAD4 (AAD4).